The chain runs to 440 residues: Ribosomal protein uS12 methylthiotransferase RimO (440 aa).

The MTTase N-terminal domain occupies 1–117; that stretch reads MKVHLTSLGC…VIEAVAGKES (117 aa). [4Fe-4S] cluster contacts are provided by Cys-10, Cys-46, Cys-80, Cys-155, Cys-159, and Cys-162. One can recognise a Radical SAM core domain in the interval 141–371; the sequence is CATPHTVYVK…MTAQIDISSR (231 aa). Positions 374–440 constitute a TRAM domain; sequence AKRVGSREPV…SAYDLTGEAQ (67 aa).

It belongs to the methylthiotransferase family. RimO subfamily. [4Fe-4S] cluster serves as cofactor.

It localises to the cytoplasm. The catalysed reaction is L-aspartate(89)-[ribosomal protein uS12]-hydrogen + (sulfur carrier)-SH + AH2 + 2 S-adenosyl-L-methionine = 3-methylsulfanyl-L-aspartate(89)-[ribosomal protein uS12]-hydrogen + (sulfur carrier)-H + 5'-deoxyadenosine + L-methionine + A + S-adenosyl-L-homocysteine + 2 H(+). Its function is as follows. Catalyzes the methylthiolation of an aspartic acid residue of ribosomal protein uS12. This is Ribosomal protein uS12 methylthiotransferase RimO from Desulfosudis oleivorans (strain DSM 6200 / JCM 39069 / Hxd3) (Desulfococcus oleovorans).